The following is a 565-amino-acid chain: Atlastin-2 (565 aa).

Residues 1-458 lie on the Cytoplasmic side of the membrane; that stretch reads MVLKKGVKFF…NIFYAARTPA (458 aa). Residues 73 to 318 form the GB1/RHD3-type G domain; sequence DLNIVVVSVA…LVPLLLAPEN (246 aa). The GDP site is built by Arg86, Lys87, Gly88, Lys89, Ser90, Phe91, Gln157, Arg226, and Asp227. The GTP site is built by Arg86, Lys87, Gly88, Lys89, Ser90, and Phe91. A Mg(2+)-binding site is contributed by Ser90. GTP is bound by residues Arg226 and Asp227. Residues 238–266 are a coiled coil; sequence LEGGKQFLEKRLQVKKNQHEELQNVRKHI. Lys252 carries the post-translational modification N6-methyllysine. 2 residues coordinate GDP: Val285 and Asn288. Val285 is a GTP binding site. Residues 356–447 are 3HB (three-helix bundle) domain; the sequence is MLQATAEANN…YANFIKHNDG (92 aa). The interval 448–456 is linker; sequence KNIFYAART. Residues 459–479 traverse the membrane as a helical segment; that stretch reads TLFAVMFAMYIISGLTGFIGL. The Lumenal segment spans residues 480–481; that stretch reads NS. A helical membrane pass occupies residues 482–502; that stretch reads IAVLCNLVMGLALTFLCTWAY. Topologically, residues 503 to 565 are cytoplasmic; the sequence is VKYSGEFREI…VSHHARLKTD (63 aa). The tract at residues 529 to 565 is autoinhibitory domain; the sequence is KPLGDNLMEENIRQSVTNSIKAGLTDQVSHHARLKTD.

This sequence belongs to the TRAFAC class dynamin-like GTPase superfamily. GB1/RHD3 GTPase family. GB1 subfamily. As to quaternary structure, monomeric and homodimeric. The homodimer, transiently formed by two molecules on opposing membranes, is the active form mediating ER membrane fusion. Interacts with REEP5 and RTN3; these proteins are involved in endoplasmic reticulum tubular network organization. Interacts with ZFYVE27; both proteins are involved in endoplasmic reticulum tubular network organization.

It localises to the endoplasmic reticulum membrane. The catalysed reaction is GTP + H2O = GDP + phosphate + H(+). Its function is as follows. Atlastin-2 (ATL2) is a membrane-anchored GTPase that mediates the GTP-dependent fusion of endoplasmic reticulum (ER) membranes, maintaining the continuous ER network. It facilitates the formation of three-way junctions where ER tubules intersect. Two atlastin-2 on neighboring ER tubules bind GTP and form loose homodimers through the GB1/RHD3-type G domains and 3HB regions. Upon GTP hydrolysis, the 3HB regions tighten, pulling the membranes together to drive their fusion. After fusion, the homodimer disassembles upon release of inorganic phosphate (Pi). Subsequently, GDP dissociates, resetting the monomers to a conformation ready for a new fusion cycle. This Macaca fascicularis (Crab-eating macaque) protein is Atlastin-2.